A 471-amino-acid chain; its full sequence is Galactolipase DONGLE, chloroplastic (471 aa).

The transit peptide at 1-88 (MAAKVFTQNP…PLSRVWREIQ (88 aa)) directs the protein to the chloroplast. Residues 44-71 (SSSTMSPPISSSPLSLPSSSSSQAIPPS) are disordered. The GXSXG motif lies at 284–288 (GHSMG). Ser286 functions as the Acyl-ester intermediate in the catalytic mechanism. Active-site charge relay system residues include Asp349 and His400.

The protein belongs to the AB hydrolase superfamily. Lipase family. In terms of tissue distribution, expressed in leaves and seedlings. Not detected in flowers, siliques or roots.

Its subcellular location is the plastid. It localises to the chloroplast. It catalyses the reaction a 1,2-diacyl-3-O-(beta-D-galactosyl)-sn-glycerol + 2 H2O = 3-beta-D-galactosyl-sn-glycerol + 2 a fatty acid + 2 H(+). It carries out the reaction a 1,2-diacyl-sn-glycero-3-phosphocholine + H2O = a 2-acyl-sn-glycero-3-phosphocholine + a fatty acid + H(+). The enzyme catalyses a 1,2-diacyl-3-O-[alpha-D-galactosyl-(1-&gt;6)-beta-D-galactosyl]-sn-glycerol + H2O = acyl-3-O-[alpha-D-galactosyl-(1-&gt;6)-beta-D-galactosyl]-sn-glycerol + a fatty acid + H(+). Functionally, sn-1-specific phospholipase that releases free fatty acids from phosphatidylcholine. Has a higher galactolipase activity than phospholipase A1 activity when digalactosyldiacylglycerol (DGDG) is used as substrate. Catalyzes the initial step of jasmonic acid biosynthesis. Required for the biosynthesis of basal-level endogenous jasmonate in vegetative tissues. Regulates leaves growth. Not essential for jasmonate biosynthesis after wounding or upon pathogen infection. In Arabidopsis thaliana (Mouse-ear cress), this protein is Galactolipase DONGLE, chloroplastic.